Here is a 168-residue protein sequence, read N- to C-terminus: ATP synthase subunit b (168 aa).

A helical membrane pass occupies residues 11-31 (EISIINTLWYLIVFSILLLAV).

Belongs to the ATPase B chain family. As to quaternary structure, F-type ATPases have 2 components, F(1) - the catalytic core - and F(0) - the membrane proton channel. F(1) has five subunits: alpha(3), beta(3), gamma(1), delta(1), epsilon(1). F(0) has three main subunits: a(1), b(2) and c(10-14). The alpha and beta chains form an alternating ring which encloses part of the gamma chain. F(1) is attached to F(0) by a central stalk formed by the gamma and epsilon chains, while a peripheral stalk is formed by the delta and b chains.

Its subcellular location is the cell membrane. Functionally, f(1)F(0) ATP synthase produces ATP from ADP in the presence of a proton or sodium gradient. F-type ATPases consist of two structural domains, F(1) containing the extramembraneous catalytic core and F(0) containing the membrane proton channel, linked together by a central stalk and a peripheral stalk. During catalysis, ATP synthesis in the catalytic domain of F(1) is coupled via a rotary mechanism of the central stalk subunits to proton translocation. Component of the F(0) channel, it forms part of the peripheral stalk, linking F(1) to F(0). This Lactobacillus delbrueckii subsp. bulgaricus (strain ATCC 11842 / DSM 20081 / BCRC 10696 / JCM 1002 / NBRC 13953 / NCIMB 11778 / NCTC 12712 / WDCM 00102 / Lb 14) protein is ATP synthase subunit b.